Reading from the N-terminus, the 103-residue chain is MLKPSIDTLLDKVPSKYSLVILEAKRAHELEAGAPATQGFKSEKSTLRALEEIESGNVTIHPDPEGKREAVRRRIEEEKRRKEEEEKKIKEQIAKEKEDGEKI.

The tract at residues 52 to 103 is disordered; it reads EIESGNVTIHPDPEGKREAVRRRIEEEKRRKEEEEKKIKEQIAKEKEDGEKI. The segment covering 62-103 has biased composition (basic and acidic residues); it reads PDPEGKREAVRRRIEEEKRRKEEEEKKIKEQIAKEKEDGEKI.

It belongs to the RNA polymerase subunit omega family. In terms of assembly, the RNAP catalytic core consists of 2 alpha, 1 beta, 1 beta' and 1 omega subunit. When a sigma factor is associated with the core the holoenzyme is formed, which can initiate transcription.

The enzyme catalyses RNA(n) + a ribonucleoside 5'-triphosphate = RNA(n+1) + diphosphate. Functionally, promotes RNA polymerase assembly. Latches the N- and C-terminal regions of the beta' subunit thereby facilitating its interaction with the beta and alpha subunits. The polypeptide is DNA-directed RNA polymerase subunit omega (Streptococcus pneumoniae serotype 19F (strain G54)).